The following is a 298-amino-acid chain: Ketohexokinase (298 aa).

Beta-D-fructose contacts are provided by Asp-15, Gly-41, Asn-42, and Asn-45. ATP-binding positions include Arg-108, 226 to 229, and 255 to 258; these read AEEG and GAGD. Residue Asp-258 coordinates beta-D-fructose.

It belongs to the carbohydrate kinase PfkB family. Homodimer. Most abundant in liver, kidney, gut, spleen and pancreas. Low levels also found in adrenal, muscle, brain and eye.

The catalysed reaction is beta-D-fructose + ATP = beta-D-fructose 1-phosphate + ADP + H(+). Its pathway is carbohydrate metabolism; fructose metabolism. Its activity is regulated as follows. Requires potassium. Inhibition by ADP. Catalyzes the phosphorylation of the ketose sugar fructose to fructose-1-phosphate. This Homo sapiens (Human) protein is Ketohexokinase.